We begin with the raw amino-acid sequence, 467 residues long: Interleukin-6 receptor subunit alpha (467 aa).

Positions 1–19 (MLAVGCALLTALLAAPGMA) are cleaved as a signal peptide. The Ig-like C2-type domain occupies 20 to 112 (LAPRGCSKLE…AGSVRLLVDA (93 aa)). The Extracellular segment spans residues 20 to 365 (LAPRGCSKLE…VQDSASVPLP (346 aa)). 4 cysteine pairs are disulfide-bonded: Cys25–Cys193, Cys47–Cys96, Cys121–Cys132, and Cys165–Cys176. Asn55 and Asn93 each carry an N-linked (GlcNAc...) asparagine glycan. Fibronectin type-III domains follow at residues 113 to 217 (PPEE…LQPD) and 218 to 316 (PPVN…IPWT). 2 N-linked (GlcNAc...) asparagine glycosylation sites follow: Asn221 and Asn245. Positions 303–307 (WSEWS) match the WSXWS motif motif. The segment at 315–357 (WTESRSSPAETELPLSTQAPTTNEDDEDISSKESANATSLPVQ) is disordered. Polar residues-rich tracts occupy residues 317 to 336 (ESRS…APTT) and 346 to 357 (KESANATSLPVQ). Asn350 carries N-linked (GlcNAc...) asparagine glycosylation. O-linked (GlcNAc) threonine glycosylation occurs at Thr352. The helical transmembrane segment at 366-386 (TFLVAGGSLAFGTLLCIGIIL) threads the bilayer. Over 387–467 (RFKKTGQLQA…VSNRDYFFPR (81 aa)) the chain is Cytoplasmic. The segment at 428-467 (ISPPVSPNSLGDNTSRNSRPEARGPQSPYDVSNRDYFFPR) is disordered.

It belongs to the type I cytokine receptor family. Type 3 subfamily. In terms of assembly, component of a hexamer of two molecules each of IL6, IL6R and IL6ST; first binds to IL6 to associate with the signaling subunit IL6ST. Interacts (via N-terminal ectodomain) with SORL1; this interaction may affect IL6-binding to IL6R, hence decrease IL6 'classic-signaling'. Also interacts with SORL1; this interaction leads to soluble IL6R internalization. May form a trimeric complex with the soluble SORL1 ectodomain and circulating IL6 receptor; this interaction might stabilize circulating IL6, hence promote IL6 'trans-signaling'. In terms of processing, a short soluble form is also released from the membrane by proteolysis. The sIL6R is formed by limited proteolysis of membrane-bound receptors, a process referred to as ectodomain shedding. mIL6R is cleaved by the proteases ADAM10 and ADAM17. Post-translationally, glycosylated. Glycosylation is dispensable for transport, signaling, and cell-surface turnover. Glycosylation at Asn-55 is a protease-regulatory exosite. Glycosylation is required for ADAM17-mediated proteolysis. As to expression, expressed in liver.

The protein resides in the cell membrane. Its subcellular location is the secreted. Its activity is regulated as follows. Classic and trans-signaling are both inhibited by tocilizumab, a humanized monoclonal antibody that blocks interleukin IL6R signaling. In terms of biological role, part of the receptor for interleukin 6. Binds to IL6 with low affinity, but does not transduce a signal. Signal activation necessitate an association with IL6ST. Activation leads to the regulation of the immune response, acute-phase reactions and hematopoiesis. The interaction with membrane-bound IL6R and IL6ST stimulates 'classic signaling', the restricted expression of the IL6R limits classic IL6 signaling to only a few tissues such as the liver and some cells of the immune system. Whereas the binding of IL6 and soluble IL6R to IL6ST stimulates 'trans-signaling'. Alternatively, 'cluster signaling' occurs when membrane-bound IL6:IL6R complexes on transmitter cells activate IL6ST receptors on neighboring receiver cells. Signaling via the membrane-bound IL6R is mostly regenerative and anti-inflammatory. Drives naive CD4(+) T cells to the Th17 lineage, through 'cluster signaling' by dendritic cells. Its function is as follows. Soluble form of IL6 receptor (sIL6R) that acts as an agonist of IL6 activity. The IL6:sIL6R complex (hyper-IL6) binds to IL6ST/gp130 on cell surfaces and induces signaling also on cells that do not express membrane-bound IL6R in a process called IL6 'trans-signaling'. sIL6R is causative for the pro-inflammatory properties of IL6 and an important player in the development of chronic inflammatory diseases. In complex with IL6, is required for induction of VEGF production. Plays a protective role during liver injury, being required for maintenance of tissue regeneration. 'Trans-signaling' in central nervous system regulates energy and glucose homeostasis. This chain is Interleukin-6 receptor subunit alpha (IL6R), found in Sus scrofa (Pig).